A 947-amino-acid chain; its full sequence is Protein translocase subunit SecA 1 (947 aa).

ATP contacts are provided by residues Q83, 101 to 105 (GEGKT), and D490. The interval 860 to 947 (AKAQEQTGQG…KTSKPTRRRG (88 aa)) is disordered. Positions 925 to 934 (TRRERREAAR) are enriched in basic and acidic residues. Over residues 935–947 (KQAKTSKPTRRRG) the composition is skewed to basic residues.

It belongs to the SecA family. In terms of assembly, monomer and homodimer. Part of the essential Sec protein translocation apparatus which comprises SecA, SecYEG and auxiliary proteins SecDF. Other proteins may also be involved.

The protein resides in the cell membrane. It is found in the cytoplasm. The enzyme catalyses ATP + H2O + cellular proteinSide 1 = ADP + phosphate + cellular proteinSide 2.. In terms of biological role, part of the Sec protein translocase complex. Interacts with the SecYEG preprotein conducting channel. Has a central role in coupling the hydrolysis of ATP to the transfer of proteins into and across the cell membrane, serving as an ATP-driven molecular motor driving the stepwise translocation of polypeptide chains across the membrane. In Mycobacterium sp. (strain KMS), this protein is Protein translocase subunit SecA 1.